The chain runs to 399 residues: Probable WRKY transcription factor 48 (399 aa).

2 stretches are compositionally biased toward basic and acidic residues: residues 1-11 and 19-38; these read MEKKKEEDHHH and KEIK…EQKQ. 2 disordered regions span residues 1 to 57 and 138 to 202; these read MEKK…TSSD and AESS…KNQK. Low complexity predominate over residues 143–161; that stretch reads VVNTTPTSPNSTSVSSSSN. Residues 162–171 are compositionally biased toward polar residues; sequence EAANDNNSGK. Residues 184 to 193 show a composition bias toward low complexity; sequence QQEQKGTKPQ. Positions 215 to 280 form a DNA-binding region, WRKY; sequence SDIDNLDDGY…YEGQHTHPFP (66 aa). Residues 361–399 form a disordered region; it reads QASTSTSSSIRDHGLLQDILPSQIRSDTINTQTNEENKK. Residues 383-399 are compositionally biased toward polar residues; that stretch reads QIRSDTINTQTNEENKK.

It localises to the nucleus. Its function is as follows. Transcription factor. Interacts specifically with the W box (5'-(T)TGAC[CT]-3'), a frequently occurring elicitor-responsive cis-acting element. The chain is Probable WRKY transcription factor 48 (WRKY48) from Arabidopsis thaliana (Mouse-ear cress).